The sequence spans 187 residues: Calmodulin-like protein 1 (187 aa).

A2 bears the N-acetylalanine mark. EF-hand domains are found at residues 8–43 (EQIV…LGQN), 44–79 (PTEA…KLRD), 81–116 (DSEE…IGER), and 117–152 (LTDE…KKRR). Ca(2+)-binding residues include D21, D23, D25, S27, E32, D57, D59, N61, N63, E68, D94, D96, N98, E105, D130, D132, D134, Q136, and E141. The segment at 153-187 (KRIEEKREHDGGSRTKSAGPSAAPASKRGQKCVIL) is disordered. Residues 154 to 165 (RIEEKREHDGGS) show a composition bias toward basic and acidic residues. Low complexity predominate over residues 169 to 178 (SAGPSAAPAS). C184 carries the post-translational modification Cysteine methyl ester. A lipid anchor (S-farnesyl cysteine) is attached at C184. Positions 185–187 (VIL) are cleaved as a propeptide — removed in mature form.

The protein belongs to the calmodulin family. As to expression, expressed in roots, etiolated shoots and flowers.

It is found in the membrane. Calcium-binding protein that binds and activates CAMK1, a calcium/calmodulin-dependent kinase. The chain is Calmodulin-like protein 1 (CML1) from Oryza sativa subsp. indica (Rice).